The following is a 217-amino-acid chain: Thiopurine S-methyltransferase (217 aa).

Residues Trp-11, Leu-46, Glu-67, and Arg-122 each coordinate S-adenosyl-L-methionine.

It belongs to the class I-like SAM-binding methyltransferase superfamily. TPMT family.

It is found in the cytoplasm. It carries out the reaction S-adenosyl-L-methionine + a thiopurine = S-adenosyl-L-homocysteine + a thiopurine S-methylether.. The sequence is that of Thiopurine S-methyltransferase from Vibrio atlanticus (strain LGP32) (Vibrio splendidus (strain Mel32)).